The following is a 145-amino-acid chain: Lysozyme-like protein 4 (145 aa).

An N-terminal signal peptide occupies residues 1–19 (MKASVVLSLIGYLVVPSDT). The 126-residue stretch at 20-145 (AVLGRCVVAK…LARWLDGCKL (126 aa)) folds into the C-type lysozyme domain. Disulfide bonds link Cys-25-Cys-143, Cys-49-Cys-130, Cys-84-Cys-95, and Cys-91-Cys-109. Glu-54 is an active-site residue.

It belongs to the glycosyl hydrolase 22 family. Monomer.

It localises to the secreted. The protein resides in the cytoplasmic vesicle. The protein localises to the secretory vesicle. Its subcellular location is the acrosome. It is found in the cell projection. It localises to the cilium. The protein resides in the flagellum. Its function is as follows. May be involved in fertilization. Has no detectable bacteriolytic and lysozyme activities in vitro. In Bos taurus (Bovine), this protein is Lysozyme-like protein 4 (LYZL4).